The chain runs to 762 residues: 1-phosphatidylinositol 4,5-bisphosphate phosphodiesterase delta-4 (762 aa).

Residues 16–124 form the PH domain; it reads LLMQEGMPMR…WMRGLQLLVD (109 aa). The interval 26–53 is substrate binding; sequence KVRSKSWKKLRYFRLQNDGMTVWHARQA. 3 consecutive EF-hand domains span residues 134–169, 170–205, and 206–237; these read RLDQ…MNVE, MDQE…LTKR, and AEVQ…EQKE. Residues D147, N149, D151, K153, E158, D183, S185, S187, T189, and E194 each coordinate Ca(2+). Positions 213 to 243 match the GBA motif; sequence ESFSADGQKLTLLEFLDFLREEQKERDCTSE. A PI-PLC X-box domain is found at 290 to 435; sequence QDMTQPLNHY…LRRRILVKGK (146 aa). H305 is a catalytic residue. Residues N306, E335, and D337 each coordinate Ca(2+). H350 is an active-site residue. Ca(2+) is bound at residue E384. Substrate contacts are provided by K433 and K435. Acidic residues predominate over residues 443–471; that stretch reads LEYEEEEAEPELEESELALESQFETEPEP. Residues 443 to 483 are disordered; that stretch reads LEYEEEEAEPELEESELALESQFETEPEPQEQNLQSKDKKK. Position 457 is a phosphoserine (S457). Residues 493-609 form the PI-PLC Y-box domain; that stretch reads LSSLVIYLKS…GYVLKPDFLR (117 aa). Substrate is bound by residues S522 and R549. Residues 609-736 enclose the C2 domain; that stretch reads RDIQSSFHPE…QGYRHIHLLS (128 aa). The Ca(2+) site is built by I650, D652, N676, D705, Y706, and D707. Residues 731–734 carry the PDZ-binding motif; that stretch reads HIHL.

As to quaternary structure, interacts with GRIP1. Interacts (via GBA motif) with guanine nucleotide-binding protein G(i) alpha subunit GNAI3 (inactive GDP-bound form); low-affinity interaction. Ca(2+) serves as cofactor.

The protein localises to the membrane. The protein resides in the nucleus. It is found in the cytoplasm. Its subcellular location is the endoplasmic reticulum. It catalyses the reaction a 1,2-diacyl-sn-glycero-3-phospho-(1D-myo-inositol-4,5-bisphosphate) + H2O = 1D-myo-inositol 1,4,5-trisphosphate + a 1,2-diacyl-sn-glycerol + H(+). The catalysed reaction is a 1,2-diacyl-sn-glycero-3-phospho-(1D-myo-inositol) + H2O = 1D-myo-inositol 1-phosphate + a 1,2-diacyl-sn-glycerol + H(+). Hydrolyzes the phosphatidylinositol 4,5-bisphosphate (PIP2) to generate 2 second messenger molecules diacylglycerol (DAG) and inositol 1,4,5-trisphosphate (IP3). DAG mediates the activation of protein kinase C (PKC), while IP3 releases Ca(2+) from intracellular stores. Required for acrosome reaction in sperm during fertilization, probably by acting as an important enzyme for intracellular Ca(2+) mobilization in the zona pellucida-induced acrosome reaction. May play a role in cell growth. Modulates the liver regeneration in cooperation with nuclear PKC. Overexpression up-regulates the Erk signaling pathway and proliferation. The polypeptide is 1-phosphatidylinositol 4,5-bisphosphate phosphodiesterase delta-4 (PLCD4) (Pongo abelii (Sumatran orangutan)).